A 506-amino-acid polypeptide reads, in one-letter code: Gallate 1-beta-glucosyltransferase 84A23 (506 aa).

The active-site Proton acceptor is the His20. His20 contributes to the an anthocyanidin binding site. UDP-alpha-D-glucose is bound by residues Gln345, His360, Trp363, Asn364, Ser365, and Glu368. Gly383 is a binding site for an anthocyanidin. Asp384 and Gln385 together coordinate UDP-alpha-D-glucose.

It belongs to the UDP-glycosyltransferase family. In terms of tissue distribution, expressed in roots of the seedlings.

Its subcellular location is the cytoplasm. The catalysed reaction is 3,4,5-trihydroxybenzoate + UDP-alpha-D-glucose = 1-O-galloyl-beta-D-glucose + UDP. It carries out the reaction 3,4-dihydroxybenzoate + UDP-alpha-D-glucose = 1-O-(3,4-dihydroxy-benzoyl)-beta-D-glucose + UDP. It catalyses the reaction 4-hydroxybenzoate + UDP-alpha-D-glucose = 4-(beta-D-glucosyloxy)benzoate + UDP + H(+). The enzyme catalyses (E)-cinnamate + UDP-alpha-D-glucose = 1-O-(trans-cinnamoyl)-beta-D-glucose + UDP. The catalysed reaction is (E)-sinapate + UDP-alpha-D-glucose = 1-O-(trans-sinapoyl)-beta-D-glucose + UDP. It carries out the reaction (E)-4-coumarate + UDP-alpha-D-glucose = 1-O-(trans-4-coumaroyl)-beta-D-glucose + UDP. It catalyses the reaction (E)-caffeate + UDP-alpha-D-glucose = 1-O-[(E)-caffeoyl]-beta-D-glucose + UDP. The enzyme catalyses (E)-ferulate + UDP-alpha-D-glucose = 1-O-[(E)-feruloyl]-beta-D-glucose + UDP. The catalysed reaction is genistein + UDP-alpha-D-glucose = genistein 7-O-beta-D-glucoside + UDP + H(+). It carries out the reaction apigenin + UDP-alpha-D-glucose = apigenin 7-O-beta-D-glucoside + UDP + H(+). It catalyses the reaction luteolin + UDP-alpha-D-glucose = luteolin 7-O-beta-D-glucoside + UDP + H(+). Its function is as follows. Glucosyltransferase that catalyzes the formation of 1-O-beta-D-glucose esters with hydroxybenzoic acids and cinnamic acid including its derivatives as preferred glucosyl acceptors. Has significant activity with gallic acid (3,4,5-trihydroxybenzoic acid), 3,4-dihydroxybenzoic acid, 4-hydroxybenzoic acid, cinnamic acid, sinapic acid, coumaric acid, caffeic acid and ferulic acid in vitro. Gallic acid is the predicted native substrate of the enzyme, which thus catalyzes the formation of 1-O-galloyl-beta-D-glucose, the first committed step of hydrolyzable tannins (HTs) biosynthesis, with punicalagin isomers being the major HTs of pomegranate. Catalyzes the formation of flavonoid glucosides with genistein, apigenin and luteolin in vitro. Has low activity with benzoic acid, 2-hydroxybenzoic acid, 3-hydroxybenzoic acid, 2,4-dihydroxybenzoic acid, naringenin and quercetin. No activity with catechol, resveratrol, chlorogenic acid, catechin and epicatechin (building blocks of proanthocyanidins) or cyanidin, delphinidin and pelargonidin (the three anthocyanidins). The sequence is that of Gallate 1-beta-glucosyltransferase 84A23 from Punica granatum (Pomegranate).